Reading from the N-terminus, the 372-residue chain is tRNA-specific 2-thiouridylase MnmA (372 aa).

Residues 16–23 and Met-42 contribute to the ATP site; that span reads GMSGGVDS. The interaction with target base in tRNA stretch occupies residues 102–104; the sequence is NPD. Residue Cys-107 is the Nucleophile of the active site. A disulfide bond links Cys-107 and Cys-205. Gly-132 contacts ATP. Positions 155–157 are interaction with tRNA; the sequence is KDQ. Cys-205 acts as the Cysteine persulfide intermediate in catalysis. Residues 317-318 are interaction with tRNA; sequence RY.

This sequence belongs to the MnmA/TRMU family.

It is found in the cytoplasm. The catalysed reaction is S-sulfanyl-L-cysteinyl-[protein] + uridine(34) in tRNA + AH2 + ATP = 2-thiouridine(34) in tRNA + L-cysteinyl-[protein] + A + AMP + diphosphate + H(+). Its function is as follows. Catalyzes the 2-thiolation of uridine at the wobble position (U34) of tRNA, leading to the formation of s(2)U34. This is tRNA-specific 2-thiouridylase MnmA from Shewanella baltica (strain OS195).